The chain runs to 133 residues: Small ribosomal subunit protein eS8 (133 aa).

The disordered stretch occupies residues M1–D22.

This sequence belongs to the eukaryotic ribosomal protein eS8 family. As to quaternary structure, part of the 30S ribosomal subunit.

This is Small ribosomal subunit protein eS8 from Saccharolobus islandicus (strain Y.N.15.51 / Yellowstone #2) (Sulfolobus islandicus).